Consider the following 439-residue polypeptide: Sequestosome-1 (439 aa).

The residue at position 2 (alanine 2) is an N-acetylalanine. Residues 2–48 are interaction with LCK; it reads ASLTVKAYLLGKEEAAREIRRFSFCFSPEPEAEAAAGPGPCERLLSR. The PB1 domain occupies 3–100; that stretch reads SLTVKAYLLG…DIFRIYIKEK (98 aa). Serine 24 carries the post-translational modification Phosphoserine. The interval 41–105 is interaction with PRKCZ and dimerization; sequence PCERLLSRVA…YIKEKKECRR (65 aa). The interaction with PAWR stretch occupies residues 48-78; it reads RVAVLFPALRPGGFQAHYRDEDGDLVAFSSD. The segment at 119–221 is interaction with GABRR3; sequence VHPNVICDGC…DGRPCPTAES (103 aa). A ZZ-type zinc finger spans residues 120–170; it reads HPNVICDGCNGPVVGTRYKCSVCPDYDLCSVCEGKGLHREHSKLIFPNPFG. Residues cysteine 125, cysteine 128, cysteine 139, and cysteine 142 each coordinate Zn(2+). At tyrosine 145 the chain carries Phosphotyrosine. The Zn(2+) site is built by cysteine 148, cysteine 151, histidine 157, and histidine 160. The LIM protein-binding stretch occupies residues 167–217; sequence NPFGHLSDSFSHSRWLRKLKHGHFGWPGWEMGPPGNWSPRPPRAGDGRPCP. A phosphoserine mark is found at serine 173, serine 175, and serine 204. The segment at 201-231 is disordered; that stretch reads GNWSPRPPRAGDGRPCPTAESASAPSEDPNV. The TRAF6-binding signature appears at 225–230; it reads PSEDPN. Residues serine 246 and serine 263 each carry the phosphoserine modification. Residues 259–389 form a disordered region; it reads GGKRSRLTPT…ALYPHLPPEA (131 aa). Positions 265-292 are enriched in polar residues; sequence LTPTSAESSSTGTEDKSGTQPSSCSSEV. Threonine 266 bears the Phosphothreonine mark. The segment at 266-439 is interaction with NTRK1; sequence TPTSAESSST…IQYSKHPPPL (174 aa). Residues serine 269 and serine 281 each carry the phosphoserine modification. The S-palmitoyl cysteine moiety is linked to residue cysteine 288. Phosphoserine occurs at positions 305, 327, and 331. The segment at 320-341 is MAP1LC3B-binding; the sequence is QPEELMESDNCSGGDDDWTHLS. Residues 335-340 carry the LIR motif; the sequence is DDWTHL. The span at 336–346 shows a compositional bias: basic and acidic residues; the sequence is DWTHLSSKEVD. The interaction with KEAP1 stretch occupies residues 346–351; it reads DPSTGE. 5 positions are modified to phosphoserine: serine 348, serine 354, serine 360, serine 364, and serine 365. The span at 350-372 shows a compositional bias: polar residues; sequence GELQSLQMPESEGPSSLDPSQEG. The UBA domain maps to 388–433; it reads EADPRLIESLSQMLSMGFSDEGGWLTRLLQTKNYDIGAALDTIQYS. Serine 402 is subject to Phosphoserine; by ULK1 and TBK1. Serine 406 carries the post-translational modification Phosphoserine. N6-acetyllysine; alternate is present on residues lysine 419 and lysine 434. Lysine 419 is covalently cross-linked (Glycyl lysine isopeptide (Lys-Gly) (interchain with G-Cter in ubiquitin); alternate). Lysine 434 participates in a covalent cross-link: Glycyl lysine isopeptide (Lys-Gly) (interchain with G-Cter in SUMO2); alternate.

As to quaternary structure, homooligomer or heterooligomer; may form homotypic arrays. Dimerization interferes with ubiquitin binding. Component of a ternary complex with PAWR and PRKCZ. Forms a complex with JUB/Ajuba, PRKCZ and TRAF6. Identified in a complex with TRAF6 and CYLD. Identified in a heterotrimeric complex with ubiquitin and ZFAND5, where ZFAND5 and SQSTM1 both interact with the same ubiquitin molecule. Interacts (via LIR motif) with MAP1LC3A and MAP1LC3B, as well as with other ATG8 family members, including GABARAP, GABARAPL1 and GABARAPL2; these interactions are necessary for the recruitment MAP1 LC3 family members to inclusion bodies containing polyubiquitinated protein aggregates and for their degradation by autophagy. Interacts directly with PRKCI and PRKCZ. Interacts with EBI3, LCK, RASA1, NR2F2, NTRK1, NTRK2, NTRK3, NBR1, MAP2K5 and MAPKAPK5. Upon TNF-alpha stimulation, interacts with RIPK1 probably bridging IKBKB to the TNF-R1 complex composed of TNF-R1/TNFRSF1A, TRADD and RIPK1. Interacts with the proteasome subunits PSMD4 and PSMC2. Interacts with TRAF6. Interacts with 'Lys-63'-linked polyubiquitinated MAPT/TAU. Interacts with FHOD3. Interacts with CYLD. Interacts with SESN1. Interacts with SESN2. Interacts with ULK1. Interacts with UBD. Interacts with WDR81; the interaction is direct and regulates the interaction of SQSTM1 with ubiquitinated proteins. Interacts with WDFY3; this interaction is required to recruit WDFY3 to cytoplasmic bodies and to PML bodies. Interacts with LRRC25. Interacts with STING1; leading to relocalization of STING1 to autophagosomes. Interacts (when phosphorylated at Ser-348) with KEAP1; the interaction is direct and inactivates the BCR(KEAP1) complex by sequestering KEAP1 in inclusion bodies, promoting its degradation. Interacts with MOAP1; promoting dissociation of SQSTM1 inclusion bodies that sequester KEAP1. Interacts with GBP1. Interacts with TAX1BP1. Interacts with (ubiquitinated) PEX5; specifically binds PEX5 ubiquitinated at 'Lys-209' in response to reactive oxygen species (ROS). Interacts (via PB1 domain) with TNS2; the interaction leads to sequestration of TNS2 in cytoplasmic aggregates with SQSTM1 and promotes TNS2 ubiquitination and proteasomal degradation. Interacts with IRS1; the interaction is disrupted by the presence of tensin TNS2. Interacts with TRIM5. Interacts with TRIM11 (when ubiquitinated); promoting AIM2 recruitment to autophagosomes and autophagy-dependent degradation of AIM2. Interacts with TRIM13. Interacts with TRIM16. Interacts with TRIM23. Interacts with TRIM50. Interacts with TRIM55. Interacts with ECSIT; this interaction inhibits TLR4 signaling via functional regulation of the TRAF6-ECSIT complex. Interacts with GABRR1, GABRR2 and GABRR3. Interacts with WDR83. Interacts with GRB2. Interacts with USP12; the interaction is independent of USP12 deubiquitinase activity and may be involved in regulation of autophagic flux. Interacts with ASB6. Phosphorylated. Phosphorylation at Ser-406 by ULK1 destabilizes the UBA dimer interface and increases binding affinity to ubiquitinated proteins. Phosphorylation at Ser-406 also primes for subsequent phosphorylation at Ser-402. Phosphorylation at Ser-402 by CK2 or ULK1 promotes binding to ubiquitinated proteins by increasing the affinity between the UBA domain and polyubiquitin chains. Phosphorylation at Ser-402 by ULK1 is stimulated by SESN2. Phosphorylated at Ser-402 by TBK1, leading to promote relocalization of 'Lys-63'-linked ubiquitinated STING1 to autophagosomes. Phosphorylation at Ser-348 by ULK1 promotes interaction with KEAP1 and inactivation of the BCR(KEAP1) complex, promoting NFE2L2/NRF2 nuclear accumulation and expression of phase II detoxifying enzymes. Phosphorylated in vitro by TTN. In terms of processing, ubiquitinated by UBE2J1 and RNF26 at Lys-434: ubiquitinated SQSTM1 attracts specific vesicle-associated adapters, forming a molecular bridge that restrains cognate vesicles in the perinuclear region and organizes the endosomal pathway for efficient cargo transport. Ubiquitination by UBE2D2 and UBE2D3 increases its ability to bind polyubiquitin chains by destabilizing the UBA dimer interface. Deubiquitination by USP15 releases target vesicles for fast transport into the cell periphery. Ubiquitinated by the BCR(KEAP1) complex at Lys-419, increasing SQSTM1 sequestering activity and promoting its degradation. Ubiquitinated via 'Lys-29' and 'Lys-33'-linked polyubiquitination leading to xenophagic targeting of bacteria and inhibition of their replication. Post-translationally, acetylated at Lys-419 and Lys-434 by KAT5/TIP60, promotes activity by destabilizing the UBA dimer interface and increases binding affinity to ubiquitinated proteins. Deacetylated by HDAC6. Palmitoylation at Cys-288 by ZDHHC19 is required for efficient autophagic degradation of SQSTM1-cargo complexes by promoting affinity for ATG8 proteins and recruitment of p62 bodies to autophagosomes. Dealmitoylated at Cys-288 by LYPLA1. Ubiquitously expressed. In brain, mainly expressed by neurons, especially pyramidal neurons in the cerebral cortex and hippocampus. Also expressed by Purkinje cells and neurons in the dentate nucleus of the cerebellum and neurons of the basal ganglia (at protein level).

The protein resides in the cytoplasmic vesicle. It localises to the autophagosome. Its subcellular location is the preautophagosomal structure. It is found in the cytoplasm. The protein localises to the cytosol. The protein resides in the nucleus. It localises to the PML body. Its subcellular location is the late endosome. It is found in the lysosome. The protein localises to the endoplasmic reticulum. The protein resides in the myofibril. It localises to the sarcomere. Functionally, molecular adapter required for selective macroautophagy (aggrephagy) by acting as a bridge between polyubiquitinated proteins and autophagosomes. Promotes the recruitment of ubiquitinated cargo proteins to autophagosomes via multiple domains that bridge proteins and organelles in different steps. SQSTM1 first mediates the assembly and removal of ubiquitinated proteins by undergoing liquid-liquid phase separation upon binding to ubiquitinated proteins via its UBA domain, leading to the formation of insoluble cytoplasmic inclusions, known as p62 bodies. SQSTM1 then interacts with ATG8 family proteins on autophagosomes via its LIR motif, leading to p62 body recruitment to autophagosomes, followed by autophagic clearance of ubiquitinated proteins. SQSTM1 is itself degraded along with its ubiquitinated cargos. Also required to recruit ubiquitinated proteins to PML bodies in the nucleus. Also involved in autophagy of peroxisomes (pexophagy) in response to reactive oxygen species (ROS) by acting as a bridge between ubiquitinated PEX5 receptor and autophagosomes. Acts as an activator of the NFE2L2/NRF2 pathway via interaction with KEAP1: interaction inactivates the BCR(KEAP1) complex by sequestering the complex in inclusion bodies, promoting nuclear accumulation of NFE2L2/NRF2 and subsequent expression of cytoprotective genes. Promotes relocalization of 'Lys-63'-linked ubiquitinated STING1 to autophagosomes. Involved in endosome organization by retaining vesicles in the perinuclear cloud: following ubiquitination by RNF26, attracts specific vesicle-associated adapters, forming a molecular bridge that restrains cognate vesicles in the perinuclear region and organizes the endosomal pathway for efficient cargo transport. Sequesters tensin TNS2 into cytoplasmic puncta, promoting TNS2 ubiquitination and proteasomal degradation. May regulate the activation of NFKB1 by TNF-alpha, nerve growth factor (NGF) and interleukin-1. May play a role in titin/TTN downstream signaling in muscle cells. Adapter that mediates the interaction between TRAF6 and CYLD. More potent than isoform 2 to stimulate PRKCZ-dependent phosphorylation of KCNAB2. The chain is Sequestosome-1 (Sqstm1) from Rattus norvegicus (Rat).